The sequence spans 302 residues: Putative gluconeogenesis factor (302 aa).

This sequence belongs to the gluconeogenesis factor family.

It localises to the cytoplasm. Functionally, required for morphogenesis under gluconeogenic growth conditions. The protein is Putative gluconeogenesis factor (ybhK) of Salmonella typhi.